The chain runs to 613 residues: DBH-like monooxygenase protein 1 (613 aa).

An N-terminal signal peptide occupies residues 1–19; it reads MCCWPLLLLWGLLPGTAAG. The Lumenal portion of the chain corresponds to 20–592; the sequence is GSGRTYPHRT…TSSSSSLHRD (573 aa). In terms of domain architecture, DOMON spans 35–148; that stretch reads GKYWLGWSQR…STVRVIWAYH (114 aa). N-linked (GlcNAc...) asparagine glycosylation is present at asparagine 114. Tyrosine 203 is an active-site residue. 2 disulfide bridges follow: cysteine 205–cysteine 257 and cysteine 242–cysteine 269. Cu cation is bound by residues histidine 235 and histidine 236. N-linked (GlcNAc...) asparagine glycosylation is present at asparagine 247. Histidine 307, histidine 389, histidine 391, and methionine 464 together coordinate Cu cation. 3 disulfides stabilise this stretch: cysteine 364–cysteine 480, cysteine 368–cysteine 550, and cysteine 443–cysteine 465. Residue histidine 389 is part of the active site. N-linked (GlcNAc...) asparagine glycans are attached at residues asparagine 476 and asparagine 517. A helical transmembrane segment spans residues 593–613; that stretch reads FSINLLVCLLLLSCTLSTKSL.

The protein belongs to the copper type II ascorbate-dependent monooxygenase family. Cu(2+) serves as cofactor. In terms of processing, N-glycosylated. Highly expressed in lung, kidney, brain and spinal cord.

It localises to the endoplasmic reticulum membrane. This Homo sapiens (Human) protein is DBH-like monooxygenase protein 1 (MOXD1).